Consider the following 556-residue polypeptide: Guanine nucleotide-binding protein-like 3 homolog (556 aa).

The disordered stretch occupies residues 29-50 (NRKVKKEAKKNGTTNKKEKTIS). A coiled-coil region spans residues 58 to 95 (KEEILVQAEQEREKIKVRQEAAKEAAKIHRIEKRKNNL). One can recognise a CP-type G domain in the interval 138 to 317 (ASEVRKTVEI…LIDSPGVILV (180 aa)). Residues 184 to 187 (NKID), 266 to 273 (GFPNVGKS), and 310 to 313 (DSPG) contribute to the GTP site. Disordered regions lie at residues 461–508 (APHN…PESL) and 525–556 (KKQKKKSKKTANRADKLSDSLGNMLGGDAMEM). A compositionally biased stretch (acidic residues) spans 466-478 (DEEEDDDDEMETD). Residues 525-535 (KKQKKKSKKTA) show a composition bias toward basic residues.

Belongs to the TRAFAC class YlqF/YawG GTPase family.

It localises to the nucleus. In terms of biological role, may play a role in regulating cellular proliferation in both germline and somatic tissues. The chain is Guanine nucleotide-binding protein-like 3 homolog from Caenorhabditis elegans.